The chain runs to 423 residues: MAQAVWSRLGRILWLSCLLPWAPAGVAAGLYELNLTTDSPATTGAEVTISASLVAKDNGSLALPADAHLYRFHWIHTPLVLTGKAEKGLSSTIRVVGHVPGEFPVSVWVTASDCWMCQPVARGFVVLHITEFLVGDLVVTQNTSLPWPSSYLTKTILKVSFLLHDPSDFLKTALFLYSWDFGDGTQMVTEDSVVYYNYSIIGTFTVKLKVVAEWEEVKPDATKAVMQKTGDFSASLKLQETLRGIQVLGPTLIQTFQKMTLTLNFLGSPPLTVCWRLKPECLPLEEGECHPVSVASTAYNLTHTFRDPGDYCFSIRAENIISKTHQYHRIQVWPSRIQPAVFAFPCATLITVMLAFIMYMTLRNATQQKDMVENPEPPSGVRCCCQMCCGPFLLETPSEYLEIVRENHGLLPPLYKSVKTYTV.

Residues 1–24 form the signal peptide; the sequence is MAQAVWSRLGRILWLSCLLPWAPA. The Extracellular portion of the chain corresponds to 25–339; sequence GVAAGLYELN…IQVWPSRIQP (315 aa). N-linked (GlcNAc...) asparagine glycans are attached at residues Asn-34, Asn-197, and Asn-300. One can recognise a PKD domain in the interval 147–233; the sequence is WPSSYLTKTI…AVMQKTGDFS (87 aa). A helical membrane pass occupies residues 340-360; the sequence is AVFAFPCATLITVMLAFIMYM. Residues 361–423 are Cytoplasmic-facing; the sequence is TLRNATQQKD…LYKSVKTYTV (63 aa).

It is found in the golgi apparatus membrane. The polypeptide is Transmembrane protein 130 (TMEM130) (Pongo abelii (Sumatran orangutan)).